The primary structure comprises 150 residues: Nucleoside diphosphate kinase (150 aa).

The ATP site is built by Lys10, Phe58, Arg86, Thr92, Arg103, and Asn113. The Pros-phosphohistidine intermediate role is filled by His116.

This sequence belongs to the NDK family. As to quaternary structure, homohexamer. Requires Mg(2+) as cofactor.

It catalyses the reaction a 2'-deoxyribonucleoside 5'-diphosphate + ATP = a 2'-deoxyribonucleoside 5'-triphosphate + ADP. The enzyme catalyses a ribonucleoside 5'-diphosphate + ATP = a ribonucleoside 5'-triphosphate + ADP. Its function is as follows. Major role in the synthesis of nucleoside triphosphates other than ATP. The ATP gamma phosphate is transferred to the NDP beta phosphate via a ping-pong mechanism, using a phosphorylated active-site intermediate. The sequence is that of Nucleoside diphosphate kinase (awd) from Drosophila yakuba (Fruit fly).